The primary structure comprises 862 residues: S-layer protein EA1 (862 aa).

Residues 1-29 (MAKTNSYKKVIAGTMTAAMVAGIVSPVAA) form the signal peptide. 3 consecutive SLH domains span residues 30 to 93 (AGKS…NAQP), 94 to 151 (SFKD…KVNG), and 152 to 214 (ELVT…DNAQ).

The protein localises to the secreted. The protein resides in the cell wall. Its subcellular location is the S-layer. The S-layer is a paracrystalline mono-layered assembly of proteins which coat the surface of bacteria. This chain is S-layer protein EA1 (eag), found in Bacillus anthracis.